The primary structure comprises 422 residues: Serine--tRNA ligase (422 aa).

Position 231 to 233 (231 to 233) interacts with L-serine; sequence TGE. 262-264 contacts ATP; sequence RQE. Glutamate 285 contributes to the L-serine binding site. An ATP-binding site is contributed by 349 to 352; it reads EISS. L-serine is bound at residue serine 384.

The protein belongs to the class-II aminoacyl-tRNA synthetase family. Type-1 seryl-tRNA synthetase subfamily. Homodimer. The tRNA molecule binds across the dimer.

The protein resides in the cytoplasm. It carries out the reaction tRNA(Ser) + L-serine + ATP = L-seryl-tRNA(Ser) + AMP + diphosphate + H(+). The enzyme catalyses tRNA(Sec) + L-serine + ATP = L-seryl-tRNA(Sec) + AMP + diphosphate + H(+). Its pathway is aminoacyl-tRNA biosynthesis; selenocysteinyl-tRNA(Sec) biosynthesis; L-seryl-tRNA(Sec) from L-serine and tRNA(Sec): step 1/1. Its function is as follows. Catalyzes the attachment of serine to tRNA(Ser). Is also able to aminoacylate tRNA(Sec) with serine, to form the misacylated tRNA L-seryl-tRNA(Sec), which will be further converted into selenocysteinyl-tRNA(Sec). This is Serine--tRNA ligase from Mesoplasma florum (strain ATCC 33453 / NBRC 100688 / NCTC 11704 / L1) (Acholeplasma florum).